The sequence spans 519 residues: Nitrogen fixation regulatory protein (519 aa).

Residues 23-93 enclose the PAS 1 domain; that stretch reads LPEIFRQTVE…QALWGRLAQK (71 aa). Residues 94–148 enclose the PAC domain; it reads KPWSGVLVNRRKDKTLYLAELTVAPVLNEAGETIYYLGMHRDTSELHELEQRVNN. The PAS 2 domain occupies 151–217; the sequence is LMIEAVVNAA…FETLENQGSA (67 aa). A Histidine kinase domain is found at 302 to 517; that stretch reads AAIHRLQGPV…RIVVELPFSA (216 aa). A Phosphohistidine; by autocatalysis modification is found at histidine 305.

It depends on FAD as a cofactor.

It catalyses the reaction ATP + protein L-histidine = ADP + protein N-phospho-L-histidine.. In terms of biological role, required for the inhibition of NifA activity in response to oxygen and low level of fixed nitrogen. In Azotobacter vinelandii, this protein is Nitrogen fixation regulatory protein (nifL).